The chain runs to 1140 residues: Envelopment polyprotein (1140 aa).

The signal sequence occupies residues 1 to 17 (MVGWVCIFLVVLTTATA). At 18–480 (GLTRNLYELK…AHSLAVELCV (463 aa)) the chain is on the lumenal side. Intrachain disulfides connect Cys-30-Cys-155, Cys-64-Cys-161, Cys-113-Cys-132, Cys-137-Cys-142, Cys-179-Cys-189, and Cys-214-Cys-251. Residue Asn-138 is glycosylated (N-linked (GlcNAc...) asparagine; by host). Asn-351 is a glycosylation site (N-linked (GlcNAc...) asparagine; by host). Cystine bridges form between Cys-380/Cys-439, Cys-384/Cys-393, Cys-409/Cys-428, and Cys-456/Cys-479. N-linked (GlcNAc...) asparagine; by host glycosylation is present at Asn-403. Residues 490 to 510 (ALLITFCFGWLLIPAVTLIIL) traverse the membrane as a helical segment. Over 511-631 (KILRLLTFSC…LGVFRYKSRC (121 aa)) the chain is Cytoplasmic. Positions 520–537 (CSHYSTESKFKVILERVK) are binding to the ribonucleoprotein. CCHC-type zinc fingers lie at residues 549 to 569 (CDIC…KKSC) and 574 to 595 (CPYC…FAIC). 3 binding to the ribonucleoprotein regions span residues 592–609 (FAIC…KKSL), 596–607 (KLTNRFQENLKK), and 615–629 (RKGC…RYKS). The 24-residue stretch at 615-638 (RKGCYRTLGVFRYKSRCYVGLVWG) folds into the ITAM domain. Tyr-619 and Tyr-632 each carry phosphotyrosine. Residues 619 to 622 (YRTL) carry the YxxL motif. Residues 632–652 (YVGLVWGILLTTELIIWAASA) form a helical membrane-spanning segment. The Lumenal segment spans residues 653–1108 (DTPLMESGWS…EWLLGILNGN (456 aa)). Disulfide bonds link Cys-739–Cys-774, Cys-743–Cys-781, Cys-755–Cys-888, Cys-769–Cys-899, Cys-784–Cys-907, Cys-810–Cys-819, Cys-827–Cys-836, and Cys-867–Cys-871. Residues 761-781 (YQYETSWGCNPPDCPGVGTGC) are fusion loop. N-linked (GlcNAc...) asparagine; by host glycosylation is present at Asn-931. 5 disulfides stabilise this stretch: Cys-973–Cys-1003, Cys-996–Cys-1048, Cys-1013–Cys-1018, Cys-1049–Cys-1054, and Cys-1088–Cys-1092. A helical transmembrane segment spans residues 1109–1129 (WVVVAVLIVILILSILLFSFF). The tract at residues 1125–1140 (LFSFFCPVRSRKNKAN) is binding to the ribonucleoprotein. Residues 1130–1140 (CPVRSRKNKAN) lie on the Cytoplasmic side of the membrane.

Belongs to the hantavirus envelope glycoprotein family. In terms of assembly, homodimer. Homotetramer; forms heterotetrameric Gn-Gc spikes in the pre-fusion conformation. Interacts (via C-terminus) with the nucleoprotein. Interacts with host TUFM; this interaction contributes to the virus-induced degradation of mitochondria by autophagy, which leads to degradation of host MAVS and inhibition of type I interferon (IFN) responses. Interacts with host MAP1LC3B; this interaction contributes to the virus-induced degradation of mitochondria by autophagy, which leads to degradation of host MAVS and inhibition of type I interferon (IFN) responses. Homodimer. Homotetramer; forms heterotetrameric Gn-Gc spikes in the pre-fusion conformation. Homotrimer; forms homotrimer in the post-fusion conformation at acidic pH. Interacts (via C-terminus) with the nucleoprotein. Post-translationally, envelope polyprotein precursor is quickly cleaved in vivo just after synthesis, presumably by host signal peptidase.

Its subcellular location is the virion membrane. The protein localises to the host cell surface. The protein resides in the host Golgi apparatus membrane. It is found in the host endoplasmic reticulum membrane. It localises to the host mitochondrion. Its function is as follows. Forms homotetramers with glycoprotein C at the surface of the virion. Attaches the virion to host cell receptors including integrin ITGAV/ITGB3. This attachment induces virion internalization predominantly through clathrin-dependent endocytosis. Mediates the assembly and budding of infectious virus particles through its interaction with the nucleocapsid protein and the viral genome. May dysregulate normal immune and endothelial cell responses through an ITAM motif. Translocates to mitochondria, binds to host TUFM and recruits MAP1LC3B. These interactions induce mitochondrial autophagy and therefore destruction of host MAVS leading to inhibition of type I interferon (IFN) responses. Concomitant breakdown of glycoprotein N is apparently prevented by the nucleoprotein that may inhibit Gn-stimulated autophagosome-lysosome fusion. Interacts with the viral genomic RNA. In terms of biological role, forms homotetramers with glycoprotein N at the surface of the virion. Attaches the virion to host cell receptors including integrin ITGAV/ITGB3. This attachment induces virion internalization predominantly through clathrin-dependent endocytosis. Class II fusion protein that promotes fusion of viral membrane with host endosomal membrane after endocytosis of the virion. This is Envelopment polyprotein (GP) from Sin Nombre orthohantavirus (SNV).